Consider the following 204-residue polypeptide: 3,4-dihydroxy-2-butanone 4-phosphate synthase (204 aa).

A Mg(2+)-binding site is contributed by Glu27. D-ribulose 5-phosphate is bound at residue Asp31. At Cys56 the chain carries S-glutathionyl cysteine. Residues Thr82 and Arg140–Thr144 each bind D-ribulose 5-phosphate. Mg(2+) is bound at residue His143.

Belongs to the DHBP synthase family. As to quaternary structure, homodimer. It depends on Mg(2+) as a cofactor. The cofactor is Mn(2+). S-glutathionylation is reversible and dependent on a glutaredoxin.

The catalysed reaction is D-ribulose 5-phosphate = (2S)-2-hydroxy-3-oxobutyl phosphate + formate + H(+). It functions in the pathway cofactor biosynthesis; riboflavin biosynthesis; 2-hydroxy-3-oxobutyl phosphate from D-ribulose 5-phosphate: step 1/1. Catalyzes the conversion of D-ribulose 5-phosphate to formate and 3,4-dihydroxy-2-butanone 4-phosphate. In Schizosaccharomyces pombe (strain 972 / ATCC 24843) (Fission yeast), this protein is 3,4-dihydroxy-2-butanone 4-phosphate synthase.